Here is a 408-residue protein sequence, read N- to C-terminus: Arginine biosynthesis bifunctional protein ArgJ (408 aa).

Substrate is bound by residues T156, K182, T193, E279, N403, and S408. T193 serves as the catalytic Nucleophile.

The protein belongs to the ArgJ family. As to quaternary structure, heterotetramer of two alpha and two beta chains.

Its subcellular location is the cytoplasm. It carries out the reaction N(2)-acetyl-L-ornithine + L-glutamate = N-acetyl-L-glutamate + L-ornithine. The enzyme catalyses L-glutamate + acetyl-CoA = N-acetyl-L-glutamate + CoA + H(+). Its pathway is amino-acid biosynthesis; L-arginine biosynthesis; L-ornithine and N-acetyl-L-glutamate from L-glutamate and N(2)-acetyl-L-ornithine (cyclic): step 1/1. It functions in the pathway amino-acid biosynthesis; L-arginine biosynthesis; N(2)-acetyl-L-ornithine from L-glutamate: step 1/4. Catalyzes two activities which are involved in the cyclic version of arginine biosynthesis: the synthesis of N-acetylglutamate from glutamate and acetyl-CoA as the acetyl donor, and of ornithine by transacetylation between N(2)-acetylornithine and glutamate. In Bordetella bronchiseptica (strain ATCC BAA-588 / NCTC 13252 / RB50) (Alcaligenes bronchisepticus), this protein is Arginine biosynthesis bifunctional protein ArgJ.